We begin with the raw amino-acid sequence, 44 residues long: Large ribosomal subunit protein bL34 (44 aa).

Basic residues-rich tracts occupy residues 1–22 (MKRT…RARM) and 31–44 (IRAR…RLSV). The segment at 1 to 44 (MKRTLGGTSRKRKRTSGFRARMRTPDGRNVIRARRKKGRHRLSV) is disordered.

This sequence belongs to the bacterial ribosomal protein bL34 family.

The sequence is that of Large ribosomal subunit protein bL34 from Nostoc punctiforme (strain ATCC 29133 / PCC 73102).